The primary structure comprises 210 residues: Inner membrane-spanning protein YciB (210 aa).

6 helical membrane passes run 12 to 32, 53 to 73, 78 to 98, 115 to 135, 153 to 173, and 175 to 195; these read EVSP…FFFA, IFIA…VSWM, LPMM…LTLW, LFGA…GYVF, WGVF…SFST, and FWVA…TLAQ.

It belongs to the YciB family.

The protein resides in the cell inner membrane. Plays a role in cell envelope biogenesis, maintenance of cell envelope integrity and membrane homeostasis. In Sinorhizobium medicae (strain WSM419) (Ensifer medicae), this protein is Inner membrane-spanning protein YciB.